The chain runs to 389 residues: (+)-bicyclogermacrene synthase TS4 (389 aa).

Positions 136, 140, 284, 288, and 292 each coordinate Mg(2+). The DDxx(x)D/E motif motif lies at 136–140; the sequence is DEVCE. Residues 284 to 292 carry the NDxxSxxxD/E motif motif; that stretch reads HDFIGLQKD.

Belongs to the terpene synthase family.

The enzyme catalyses (2E,6E)-farnesyl diphosphate = bicyclogermacrene + diphosphate. Its function is as follows. Catalyzes the cyclization of trans,trans-farnesyl diphosphate (FPP) to the bicyclic sesquiterpene bicyclogermacrene. The sequence is that of (+)-bicyclogermacrene synthase TS4 from Penicillium expansum (Blue mold rot fungus).